Consider the following 644-residue polypeptide: Chaperone protein DnaK (644 aa).

Threonine 199 is modified (phosphothreonine; by autocatalysis). Residues 602 to 644 (IYAKKSSEGQTAQGQTQSQESTKPAEEGVVDAEFEEVKEEDKK) form a disordered region. The span at 609–623 (EGQTAQGQTQSQEST) shows a compositional bias: polar residues. Acidic residues predominate over residues 629–644 (GVVDAEFEEVKEEDKK).

Belongs to the heat shock protein 70 family.

Its function is as follows. Acts as a chaperone. The chain is Chaperone protein DnaK from Legionella pneumophila (strain Lens).